A 243-amino-acid polypeptide reads, in one-letter code: 1-(5-phosphoribosyl)-5-[(5-phosphoribosylamino)methylideneamino] imidazole-4-carboxamide isomerase (243 aa).

Catalysis depends on aspartate 8, which acts as the Proton acceptor. Residue aspartate 130 is the Proton donor of the active site.

It belongs to the HisA/HisF family.

The protein localises to the cytoplasm. It catalyses the reaction 1-(5-phospho-beta-D-ribosyl)-5-[(5-phospho-beta-D-ribosylamino)methylideneamino]imidazole-4-carboxamide = 5-[(5-phospho-1-deoxy-D-ribulos-1-ylimino)methylamino]-1-(5-phospho-beta-D-ribosyl)imidazole-4-carboxamide. The protein operates within amino-acid biosynthesis; L-histidine biosynthesis; L-histidine from 5-phospho-alpha-D-ribose 1-diphosphate: step 4/9. This chain is 1-(5-phosphoribosyl)-5-[(5-phosphoribosylamino)methylideneamino] imidazole-4-carboxamide isomerase, found in Acinetobacter baumannii (strain SDF).